The chain runs to 351 residues: Methionine import ATP-binding protein MetN (351 aa).

An ABC transporter domain is found at 2-247 (ITTSGLTKVY…PGSELAAALF (246 aa)). 38–45 (GQSGAGKS) contacts ATP.

Belongs to the ABC transporter superfamily. Methionine importer (TC 3.A.1.24) family. In terms of assembly, the complex is composed of two ATP-binding proteins (MetN), two transmembrane proteins (MetI) and a solute-binding protein (MetQ).

It is found in the cell membrane. It catalyses the reaction L-methionine(out) + ATP + H2O = L-methionine(in) + ADP + phosphate + H(+). The catalysed reaction is D-methionine(out) + ATP + H2O = D-methionine(in) + ADP + phosphate + H(+). Functionally, part of the ABC transporter complex MetNIQ involved in methionine import. Responsible for energy coupling to the transport system. This Streptomyces coelicolor (strain ATCC BAA-471 / A3(2) / M145) protein is Methionine import ATP-binding protein MetN.